The chain runs to 799 residues: Phenylalanine--tRNA ligase beta subunit (799 aa).

One can recognise a tRNA-binding domain in the interval 39–150 (GKGFSGVIVG…EHLQAGTALN (112 aa)). The 77-residue stretch at 402–478 (FLELTIRCRL…RIYGYDHIPR (77 aa)) folds into the B5 domain. Aspartate 456, aspartate 462, glutamate 465, and glutamate 466 together coordinate Mg(2+). The region spanning 705–798 (AIYPGSERDW…VSQKFANDLK (94 aa)) is the FDX-ACB domain.

This sequence belongs to the phenylalanyl-tRNA synthetase beta subunit family. Type 1 subfamily. As to quaternary structure, tetramer of two alpha and two beta subunits. Requires Mg(2+) as cofactor.

The protein resides in the cytoplasm. It carries out the reaction tRNA(Phe) + L-phenylalanine + ATP = L-phenylalanyl-tRNA(Phe) + AMP + diphosphate + H(+). The polypeptide is Phenylalanine--tRNA ligase beta subunit (Protochlamydia amoebophila (strain UWE25)).